A 515-amino-acid polypeptide reads, in one-letter code: MINVLINKSSKLVNGVDSCINNKTIRLFCSSSSTNQVNKTPFNLCIIGSGPAGLYTAAKVHRQIPHANITILEKLPYPFGLVRSGISPDHQNEKKVKNTLEKVLLEHPHQIQFIGNVDIEKDIKFQYIKDNFHAVVLACGIEGDKKLGIPGELTLKNVYFAREFIGWLNGNLKDQHKQFDLSNENLAIVGQGNVALDVARLLLKKNSDELKKTDITSTSFDKINKSNVKNIHIIGRRGPLEVSFTNKEIREILTLQNVNTFINDISTLDVSEEDVSKLERAKKRTFELFKQHLKPFDQEIANNGNMNLIFHFLRSPVELLDKYGSSSGSGDGMVLSKIKLEKNKLIIDEKTQQKKAIGSGEFEIIECSSLFRSIGYTGTKQFPSVPFDFNSVSIPNKYGKVLEEPNSDKFINGLYVSGWLKGGPSGSIPNISANSEETASIIHQDYESNQFINNNNNNDGGHNSITSLLQPNHKIINFNDYKKIESEEVKRGKEKGKLLEKIIVFDELKNIINNS.

FAD-binding residues include alanine 52, glutamate 73, leucine 81, and isoleucine 119. NADP(+) contacts are provided by residues 191-194, 236-237, and glutamate 248; these read QGNV and RR. FAD contacts are provided by residues tryptophan 419 and 426–428; that span reads GSI. Glycine 426 serves as a coordination point for NADP(+).

This sequence belongs to the ferredoxin--NADP reductase type 1 family. The cofactor is FAD.

It localises to the mitochondrion inner membrane. The catalysed reaction is 2 reduced [adrenodoxin] + NADP(+) + H(+) = 2 oxidized [adrenodoxin] + NADPH. The sequence is that of Probable NADPH:adrenodoxin oxidoreductase, mitochondrial (fdxr) from Dictyostelium discoideum (Social amoeba).